Consider the following 355-residue polypeptide: Phosphate acyltransferase (355 aa).

It belongs to the PlsX family. As to quaternary structure, homodimer. Probably interacts with PlsY.

It localises to the cytoplasm. It catalyses the reaction a fatty acyl-[ACP] + phosphate = an acyl phosphate + holo-[ACP]. Its pathway is lipid metabolism; phospholipid metabolism. Functionally, catalyzes the reversible formation of acyl-phosphate (acyl-PO(4)) from acyl-[acyl-carrier-protein] (acyl-ACP). This enzyme utilizes acyl-ACP as fatty acyl donor, but not acyl-CoA. The protein is Phosphate acyltransferase of Erythrobacter litoralis (strain HTCC2594).